The following is a 145-amino-acid chain: uncharacterized protein (145 aa).

Residues 95 to 119 (YVDSTSRTPSAKKDMQGLSVSEKQT) form a disordered region.

This is an uncharacterized protein from Treponema pallidum (strain Nichols).